A 101-amino-acid chain; its full sequence is Protein translation factor SUI1 homolog (101 aa).

It belongs to the SUI1 family.

The chain is Protein translation factor SUI1 homolog from Methanosphaera stadtmanae (strain ATCC 43021 / DSM 3091 / JCM 11832 / MCB-3).